A 433-amino-acid chain; its full sequence is Cell division control protein KAR1 (433 aa).

Disordered stretches follow at residues 1-38 (MNVT…SINL), 69-101 (TKNI…FYNG), and 207-227 (KPLP…TLQR). Residue Thr-233 is modified to Phosphothreonine.

In terms of assembly, interacts with SPC72.

Its subcellular location is the cytoplasm. The protein resides in the cytoskeleton. It localises to the microtubule organizing center. It is found in the spindle pole body. Its function is as follows. KAR1 is required for function of both intranuclear and extranuclear microtubules. KAR1 helps localize CDC31 to the spindle pole body (SPB), CDC31 then initiates SPB duplication via interaction with a downstream effector. In Saccharomyces cerevisiae (strain ATCC 204508 / S288c) (Baker's yeast), this protein is Cell division control protein KAR1 (KAR1).